The chain runs to 301 residues: Glycine--tRNA ligase alpha subunit (301 aa).

It belongs to the class-II aminoacyl-tRNA synthetase family. Tetramer of two alpha and two beta subunits.

It localises to the cytoplasm. It catalyses the reaction tRNA(Gly) + glycine + ATP = glycyl-tRNA(Gly) + AMP + diphosphate. The sequence is that of Glycine--tRNA ligase alpha subunit from Polaromonas sp. (strain JS666 / ATCC BAA-500).